Here is a 242-residue protein sequence, read N- to C-terminus: Small ribosomal subunit protein uS2 (242 aa).

It belongs to the universal ribosomal protein uS2 family.

The sequence is that of Small ribosomal subunit protein uS2 from Vibrio campbellii (strain ATCC BAA-1116).